The sequence spans 531 residues: Importin subunit alpha-2 (531 aa).

The span at 1-10 (MTLTETSLSH) shows a compositional bias: polar residues. Residues 1 to 88 (MTLTETSLSH…ISHQQSSTRL (88 aa)) form a disordered region. Residues 5–67 (ETSLSHNAEE…RNIVDVDEGG (63 aa)) form the IBB domain. Composition is skewed to basic and acidic residues over residues 11 to 20 (NAEEGKDEGG) and 29 to 50 (TKHEELRRRRTECSVEIRKQKG). A compositionally biased stretch (acidic residues) spans 62–75 (DVDEGGNSESELEE). ARM repeat units lie at residues 122–161 (NPPIDEVIHCGLLQALVQALSVENERVQYEAAWALTNIVS), 164–203 (TEQTIAAVEAGVTIPLIHLSVHQSAQISEQALWAVANIAG), 250–290 (KNPH…YLTD), 293–331 (DEQIELARESGVLPHVVAFFKEAENLVAPALRTLGNVAT), 334–374 (DSLT…NIIA), 377–416 (QKQIQAVLDANLLPVLINVLKSGDHKCQFEASWALSNLAQ), and 420–459 (NRQVVAMLEDNVVPALCQALLQTNTDMLNNTLETLYTLML). Positions 511–531 (DDAGEKESHENADPQDNKWSF) are disordered. Over residues 515–531 (EKESHENADPQDNKWSF) the composition is skewed to basic and acidic residues.

The protein belongs to the importin alpha family. As to quaternary structure, forms a complex with an importin beta subunit. Interacts with akir-1. Germline tissues. Expressed exclusively in germ line cells from the early embryonic through adult stages.

It is found in the cytoplasm. The protein resides in the nucleus. It localises to the nucleus envelope. Nuclear transport receptor that mediates nuclear import of proteins, and which is involved in sister chromatid cohesion. Binds specifically and directly to substrates containing either a simple or bipartite nuclear localization signals (NLS) motif. Promotes docking of import substrates to the nuclear envelope. Together with akir-1 adapter, required for the import and load of cohesin complex proteins in meiotic nuclei. This is Importin subunit alpha-2 from Caenorhabditis elegans.